Reading from the N-terminus, the 795-residue chain is Delta-1-pyrroline-5-carboxylate synthase (795 aa).

Residues 1 to 361 are glutamate 5-kinase; sequence MLRHMHRSGV…FFSEVKPAGP (361 aa). Positions 117, 223, and 246 each coordinate substrate. ATP is bound by residues 266-267 and 305-311; these read SD and LGGMEAK. 3 positions are modified to N6-succinyllysine: Lys311, Lys347, and Lys550. Positions 362 to 795 are gamma-glutamyl phosphate reductase; sequence TVEQQGEMAR…NLPVPQRNFS (434 aa).

This sequence in the N-terminal section; belongs to the glutamate 5-kinase family. In the C-terminal section; belongs to the gamma-glutamyl phosphate reductase family. As to quaternary structure, can form homodimers/multimers.

It is found in the mitochondrion matrix. The enzyme catalyses L-glutamate + ATP = L-glutamyl 5-phosphate + ADP. It carries out the reaction L-glutamate 5-semialdehyde + phosphate + NADP(+) = L-glutamyl 5-phosphate + NADPH + H(+). It functions in the pathway amino-acid biosynthesis; L-proline biosynthesis; L-glutamate 5-semialdehyde from L-glutamate: step 1/2. The protein operates within amino-acid biosynthesis; L-proline biosynthesis; L-glutamate 5-semialdehyde from L-glutamate: step 2/2. Its activity is regulated as follows. Isoform Short: Inhibited by L-ornithine with a Ki of approximately 0.25 mm. Isoform Long: Insensitive to ornithine inhibition. Thus, the two amino acid insert in the long isoform abolishes feedback inhibition of P5CS activity by L-ornithine. Functionally, bifunctional enzyme that converts glutamate to glutamate 5-semialdehyde, an intermediate in the biosynthesis of proline, ornithine and arginine. In Mus musculus (Mouse), this protein is Delta-1-pyrroline-5-carboxylate synthase (Aldh18a1).